We begin with the raw amino-acid sequence, 512 residues long: Cobyric acid synthase (512 aa).

A GATase cobBQ-type domain is found at 251–451 (ALDIAVIRLP…IHGLFDSHHF (201 aa)). Cys332 (nucleophile) is an active-site residue. The active site involves His443.

The protein belongs to the CobB/CobQ family. CobQ subfamily.

The protein operates within cofactor biosynthesis; adenosylcobalamin biosynthesis. Its function is as follows. Catalyzes amidations at positions B, D, E, and G on adenosylcobyrinic A,C-diamide. NH(2) groups are provided by glutamine, and one molecule of ATP is hydrogenolyzed for each amidation. The polypeptide is Cobyric acid synthase (Yersinia enterocolitica serotype O:8 / biotype 1B (strain NCTC 13174 / 8081)).